The chain runs to 1004 residues: Ephrin type-A receptor 8 (1004 aa).

The first 26 residues, 1 to 26, serve as a signal peptide directing secretion; the sequence is MAPARARLSPALWVVTAAAAATCVSA. At 27–541 the chain is on the extracellular side; the sequence is GRGEVNLLDT…KPRPRYDTRT (515 aa). Positions 30–208 constitute an Eph LBD domain; that stretch reads EVNLLDTSTI…YYKKCPAMVR (179 aa). 2 consecutive Fibronectin type-III domains span residues 327 to 437 and 438 to 533; these read PPSA…TNQA and APSQ…TGKP. Asparagine 339, asparagine 406, and asparagine 431 each carry an N-linked (GlcNAc...) asparagine glycan. A helical membrane pass occupies residues 542–562; sequence IVWICLTLITGLVVLLLLLIC. Residues 563 to 569 are mediates interaction with ANKS1A and ANKS1B; it reads KKRHCGY. Over 563–1004 the chain is Cytoplasmic; sequence KKRHCGYSKA…SSTQGPRRHL (442 aa). Positions 588-643 are mediates interaction with PIK3CG and required for endocytosis; sequence APPPVFLPLNHPPGKFPETQFSAEPHTYEEPGRAGRSFTREIEASRIHIEKIIGSG. Tyrosine 615 bears the Phosphotyrosine; by autocatalysis mark. The Protein kinase domain maps to 634–895; it reads IHIEKIIGSG…HVVSVLDALV (262 aa). Residues 640 to 648 and lysine 666 each bind ATP; that span reads IGSGESGEV. Aspartate 759 acts as the Proton acceptor in catalysis. Tyrosine 838 is subject to Phosphotyrosine; by autocatalysis. Positions 929–993 constitute an SAM domain; sequence NGDLTVGDWL…LGSIQTMRAQ (65 aa). Residues 1002–1004 carry the PDZ-binding motif; it reads RHL.

The protein belongs to the protein kinase superfamily. Tyr protein kinase family. Ephrin receptor subfamily. Heterotetramer upon binding of the ligand. The heterotetramer is composed of an ephrin dimer and a receptor dimer. Oligomerization is probably required to induce biological responses. May also form heterodimers with other ephrin receptors. Interacts with FYN; possible downstream effector of EPHA8 in regulation of cell adhesion. Interacts with PIK3CG; regulates integrin-mediated cell adhesion to substrate. Interacts with TIAM1; regulates clathrin-mediated endocytosis of EPHA8. Interacts with ANKS1A and ANKS1B; EPHA8 kinase activity-independent but stimulated by EPHA8 ubiquitination. Phosphorylated. Phosphorylation is stimulated upon binding of its ligands including EFNA2, EFNA3 and EFNA5. Autophosphorylation on Tyr-615 is critical for association with FYN. Autophosphorylation on Tyr-838 modulates tyrosine kinase activity. In terms of processing, ubiquitinated. Ubiquitination by CBL regulates the receptor stability and activity through proteasomal degradation. ANKS1A prevents ubiquitination and degradation. Specifically expressed in the central nervous system.

It is found in the cell membrane. The protein localises to the cell projection. It localises to the early endosome membrane. It catalyses the reaction L-tyrosyl-[protein] + ATP = O-phospho-L-tyrosyl-[protein] + ADP + H(+). Its function is as follows. Receptor tyrosine kinase which binds promiscuously GPI-anchored ephrin-A family ligands residing on adjacent cells, leading to contact-dependent bidirectional signaling into neighboring cells. The signaling pathway downstream of the receptor is referred to as forward signaling while the signaling pathway downstream of the ephrin ligand is referred to as reverse signaling. The GPI-anchored ephrin-A EFNA2, EFNA3, and EFNA5 are able to activate EPHA8 through phosphorylation. With EFNA5 may regulate integrin-mediated cell adhesion and migration on fibronectin substrate but also neurite outgrowth. During development of the nervous system also plays a role in axon guidance. Downstream effectors of the EPHA8 signaling pathway include FYN which promotes cell adhesion upon activation by EPHA8 and the MAP kinases in the stimulation of neurite outgrowth. The polypeptide is Ephrin type-A receptor 8 (Epha8) (Mus musculus (Mouse)).